A 291-amino-acid polypeptide reads, in one-letter code: Pirin (291 aa).

Fe cation is bound by residues His-56, His-58, His-101, and Glu-103.

It belongs to the pirin family. As to quaternary structure, may interact with NF1/CTF1. Interacts with BCL3. Identified in a complex comprised of PIR, BLC3, NFKB1 and target DNA. Fe cation serves as cofactor.

It localises to the nucleus. The protein localises to the cytoplasm. The catalysed reaction is quercetin + O2 = 2-(3,4-dihydroxybenzoyloxy)-4,6-dihydroxybenzoate + CO. It participates in flavonoid metabolism; quercetin degradation. In terms of biological role, transcriptional coregulator of NF-kappa-B which facilitates binding of NF-kappa-B proteins to target kappa-B genes in a redox-state-dependent manner. May be required for efficient terminal myeloid maturation of hematopoietic cells. Has quercetin 2,3-dioxygenase activity (in vitro). The chain is Pirin (Pir) from Rattus norvegicus (Rat).